The sequence spans 297 residues: Formylmethanofuran--tetrahydromethanopterin formyltransferase (297 aa).

It belongs to the FTR family. In terms of assembly, homotetramer.

It localises to the cytoplasm. It carries out the reaction N-formylmethanofuran + 5,6,7,8-tetrahydromethanopterin + H(+) = N(5)-formyl-5,6,7,8-tetrahydromethanopterin + methanofuran. The protein operates within metabolic intermediate metabolism; lactate oxidation. Catalyzes the transfer of a formyl group from 5-formyl tetrahydromethanopterin (5-formyl-H(4)MPT) to methanofuran (MFR) to produce formylmethanofuran (formyl-MFR) and tetrahydromethanopterin (H(4)MPT). This chain is Formylmethanofuran--tetrahydromethanopterin formyltransferase, found in Archaeoglobus fulgidus (strain ATCC 49558 / DSM 4304 / JCM 9628 / NBRC 100126 / VC-16).